The primary structure comprises 501 residues: Mitogen-activated protein kinase MKC1 (501 aa).

Positions 28–339 constitute a Protein kinase domain; the sequence is FKIVKELGHG…VRDALNHKYL (312 aa). Residues 34 to 42 and Lys-74 contribute to the ATP site; that span reads LGHGAYGIV. The active-site Proton acceptor is Asp-174. Thr-211 is subject to Phosphothreonine. The short motif at 211–213 is the TXY element; it reads TEY. Phosphotyrosine is present on Tyr-213. Positions 400–450 are disordered; sequence MQKREEQRQEEEEKELLEQQRQFPAQESMDISQTPYNNLETNIGTPQVEDD. Over residues 422-444 the composition is skewed to polar residues; it reads FPAQESMDISQTPYNNLETNIGT.

The protein belongs to the protein kinase superfamily. CMGC Ser/Thr protein kinase family. MAP kinase subfamily. Mg(2+) serves as cofactor. Dually phosphorylated on Thr-211 and Tyr-213, which activates the enzyme.

The enzyme catalyses L-seryl-[protein] + ATP = O-phospho-L-seryl-[protein] + ADP + H(+). The catalysed reaction is L-threonyl-[protein] + ATP = O-phospho-L-threonyl-[protein] + ADP + H(+). Its activity is regulated as follows. Activated by tyrosine and threonine phosphorylation. This is Mitogen-activated protein kinase MKC1 (MKC1) from Candida albicans (Yeast).